A 161-amino-acid chain; its full sequence is Small ribosomal subunit protein uS9 (161 aa).

Disordered regions lie at residues 1 to 28 (MAQI…PKAP) and 142 to 161 (KERK…FSKR).

The protein belongs to the universal ribosomal protein uS9 family.

This Clavibacter sepedonicus (Clavibacter michiganensis subsp. sepedonicus) protein is Small ribosomal subunit protein uS9.